The chain runs to 155 residues: Troponin C, isoform 2 (155 aa).

4 consecutive EF-hand domains span residues 11–46 (EQIA…MGQP), 47–82 (FDRQ…FIVE), 87–122 (AMQK…LDDQ), and 123–155 (LTEQ…MTGE). Ca(2+)-binding residues include Asp-60, Asp-62, Ser-64, Arg-66, and Glu-71. The Ca(2+) site is built by Asp-136, Asp-138, Ser-140, Thr-142, and Glu-147.

Belongs to the troponin C family. In terms of tissue distribution, accumulates almost exclusively in larval muscles.

This chain is Troponin C, isoform 2 (TpnC47D), found in Drosophila melanogaster (Fruit fly).